We begin with the raw amino-acid sequence, 482 residues long: uncharacterized protein (482 aa).

Composition is skewed to low complexity over residues 24–86 (SPNS…AQQQ) and 312–339 (TDSL…SQSI). Disordered regions lie at residues 24–88 (SPNS…QQHY) and 307–376 (LHSQ…LIGK). Acidic residues predominate over residues 342 to 363 (EEEEDGGEDEEEEGGEDNDNES).

This is an uncharacterized protein from Dictyostelium discoideum (Social amoeba).